The primary structure comprises 448 residues: uncharacterized protein (448 aa).

The helical transmembrane segment at 19–41 (LGLLVPFLLLLFSCTNTVGYGVL) threads the bilayer. The SH3b domain maps to 105-181 (YSYATSVLDG…CFSHGLSLFD (77 aa)).

Its subcellular location is the membrane. This is an uncharacterized protein from Treponema pallidum (strain Nichols).